The following is a 239-amino-acid chain: Ribosomal RNA small subunit methyltransferase G (239 aa).

S-adenosyl-L-methionine is bound by residues glycine 79, phenylalanine 84, 130–131 (AE), and arginine 149.

Belongs to the methyltransferase superfamily. RNA methyltransferase RsmG family.

The protein localises to the cytoplasm. In terms of biological role, specifically methylates the N7 position of a guanine in 16S rRNA. The protein is Ribosomal RNA small subunit methyltransferase G of Lactobacillus johnsonii (strain CNCM I-12250 / La1 / NCC 533).